The chain runs to 306 residues: Mitochondrial glycine transporter (306 aa).

Solcar repeat units lie at residues 25–114, 121–205, and 217–301; these read QPVI…LKQY, PTAL…TKNV, and LVPV…MMAK. Transmembrane regions (helical) follow at residues 31 to 56, 89 to 115, 127 to 152, 180 to 203, 221 to 247, and 276 to 294; these read FLCG…TRLQ, GMSP…KQYF, VILG…TRYE, GLTA…SQTK, VNFS…KTHM, and GSVP…AWTV.

The protein belongs to the mitochondrial carrier (TC 2.A.29) family. SLC25A38 subfamily.

The protein localises to the mitochondrion inner membrane. It carries out the reaction glycine(in) = glycine(out). Functionally, mitochondrial glycine transporter that imports glycine into the mitochondrial matrix. Plays an important role in providing glycine for the first enzymatic step in heme biosynthesis, the condensation of glycine with succinyl-CoA to produce 5-aminolevulinate (ALA) in the mitochondrial matrix. Required during erythropoiesis. Its function is as follows. Plays a role as pro-apoptotic protein that induces caspase-dependent apoptosis. In Ovis aries (Sheep), this protein is Mitochondrial glycine transporter.